A 433-amino-acid chain; its full sequence is Ectonucleoside triphosphate diphosphohydrolase 5 (433 aa).

The first 24 residues, 1–24 (MATTWGAAFFMLVASCVCSTVFHR), serve as a signal peptide directing secretion. The Proton acceptor role is filled by Glu172. Residue Asn232 is glycosylated (N-linked (GlcNAc...) asparagine). 2 cysteine pairs are disulfide-bonded: Cys272–Cys308 and Cys368–Cys382.

It belongs to the GDA1/CD39 NTPase family. As to quaternary structure, monomer; active form. Homodimer; disulfide-linked. Homodimers are enzymatically inactive. Ca(2+) is required as a cofactor. The cofactor is Mg(2+). In terms of processing, N-glycosylated; high-mannose type.

The protein localises to the endoplasmic reticulum. It localises to the secreted. It carries out the reaction a ribonucleoside 5'-diphosphate + H2O = a ribonucleoside 5'-phosphate + phosphate + H(+). The catalysed reaction is GDP + H2O = GMP + phosphate + H(+). The enzyme catalyses UDP + H2O = UMP + phosphate + H(+). It catalyses the reaction IDP + H2O = IMP + phosphate + H(+). It carries out the reaction CDP + H2O = CMP + phosphate + H(+). The catalysed reaction is ADP + H2O = AMP + phosphate + H(+). The protein operates within protein modification; protein glycosylation. Its function is as follows. Hydrolyzes nucleoside diphosphates with a preference for GDP, IDP and UDP compared to ADP and CDP. In the lumen of the endoplasmic reticulum, hydrolyzes UDP that acts as an end-product feedback inhibitor of the UDP-Glc:glycoprotein glucosyltransferases. UMP can be transported back by an UDP-sugar antiporter to the cytosol where it is consumed to regenerate UDP-glucose. Therefore, it positively regulates protein reglucosylation by clearing UDP from the ER lumen and by promoting the regeneration of UDP-glucose. Protein reglucosylation is essential to proper glycoprotein folding and quality control in the ER. The sequence is that of Ectonucleoside triphosphate diphosphohydrolase 5 (ENTPD5) from Ailuropoda melanoleuca (Giant panda).